Reading from the N-terminus, the 171-residue chain is uncharacterized protein (171 aa).

In terms of domain architecture, HTH marR-type spans 33 to 166 (AISIATNLYR…LTGLLRKVAD (134 aa)). The segment at residues 80–103 (TRKIAELSGISTATASNVIKTLEK) is a DNA-binding region (H-T-H motif).

This is an uncharacterized protein from Bacillus subtilis (strain 168).